Consider the following 1663-residue polypeptide: Kotanin synthase (1663 aa).

The segment at 19–168 (RPHEFSFNTQ…PLPVYGGPCH (150 aa)) is N-terminal acylcarrier protein transacylase domain (SAT). A Ketosynthase family 3 (KS3) domain is found at 301–731 (DSRIAVVGMS…GGNTSLLLEE (431 aa)). Catalysis depends on for beta-ketoacyl synthase activity residues Cys474, His609, and His650. A malonyl-CoA:ACP transacylase (MAT) domain region spans residues 830–1149 (FIFSGQGSFY…SMCTLQETGV (320 aa)). The segment at 1209–1527 (TALVHQIMEE…PRILMNRFFD (319 aa)) is product template (PT) domain. An N-terminal hotdog fold region spans residues 1213 to 1349 (HQIMEESFRP…GVVRCGDRQS (137 aa)). One can recognise a PKS/mFAS DH domain in the interval 1213 to 1523 (HQIMEESFRP…LRPLPRILMN (311 aa)). Catalysis depends on His1245, which acts as the Proton acceptor; for dehydratase activity. The C-terminal hotdog fold stretch occupies residues 1376 to 1523 (QASRVSRDLV…LRPLPRILMN (148 aa)). Residue Asp1434 is the Proton donor; for dehydratase activity of the active site. Positions 1544–1580 (DLPQVQHQPSPTTDSGPDDDPKDPNTGPLTPEVDLPV) are disordered. Positions 1586 to 1663 (KANTKLVRGA…ELKEYLTASW (78 aa)) constitute a Carrier domain. O-(pantetheine 4'-phosphoryl)serine is present on Ser1623.

It depends on pantetheine 4'-phosphate as a cofactor.

Its pathway is secondary metabolite biosynthesis. In terms of biological role, non-reducing polyketide synthase; part of the gene cluster that mediates the biosynthesis of the bicoumarin kotanin. The non-reducing polyketide synthase ktnS first catalyzes the formation of the pentaketidic 4,7-dihydroxy-5-methylcoumarin from acetyl coenzyme A and 4 malonyl coenzyme A molecules. Further O-methylation by ktnB leads to the formation of 7-demethylsiderin. Then, an oxidative phenol coupling catalyzed by the cytochrome P450 monooxygenase ktnC forms the 8,8'-dimer P-orlandin via dimerization the monomeric precursor, 7-demethylsiderin. P-orlandin is subsequently O-methylated in a stepwise fashion to demethylkotanin and kotanin. The polypeptide is Kotanin synthase (Aspergillus niger (strain ATCC MYA-4892 / CBS 513.88 / FGSC A1513)).